The sequence spans 1315 residues: DNA-directed RNA polymerase subunit beta' (1315 aa).

Residues Cys-60, Cys-62, Cys-75, and Cys-78 each coordinate Zn(2+). Mg(2+)-binding residues include Asp-535, Asp-537, and Asp-539. Residues Cys-890, Cys-967, Cys-974, and Cys-977 each contribute to the Zn(2+) site.

This sequence belongs to the RNA polymerase beta' chain family. The RNAP catalytic core consists of 2 alpha, 1 beta, 1 beta' and 1 omega subunit. When a sigma factor is associated with the core the holoenzyme is formed, which can initiate transcription. Mg(2+) serves as cofactor. Requires Zn(2+) as cofactor.

It carries out the reaction RNA(n) + a ribonucleoside 5'-triphosphate = RNA(n+1) + diphosphate. In terms of biological role, DNA-dependent RNA polymerase catalyzes the transcription of DNA into RNA using the four ribonucleoside triphosphates as substrates. In Mycobacterium sp. (strain MCS), this protein is DNA-directed RNA polymerase subunit beta'.